Here is a 175-residue protein sequence, read N- to C-terminus: METNCPNILYLSGITIEECLQTKKTATDTLNTNDDEAEVEKKLPSVFTTVSKWVTHSSFKCWTCHLYFKTVPKFVPTYMRENERGEIEMGVLGNFCSFSCAASYVDVHYTEPKRWEARELLNMLYRFFTSQWISYIKPAPSYTMRKEYGGKLSEEAFISELHTLEESISSKHIFI.

Belongs to the asfivirus B175L family.

This is an uncharacterized protein from African swine fever virus (strain Badajoz 1971 Vero-adapted) (Ba71V).